The following is a 468-amino-acid chain: mRNA cleavage and polyadenylation factor CLP1 (468 aa).

The segment at 1 to 22 (MLSLPGLNLAPQPAEPLNAPTS) is disordered. Residues glutamate 35, lysine 74, and 138–143 (HSGKTS) each bind ATP.

Belongs to the Clp1 family. Clp1 subfamily. As to quaternary structure, component of a pre-mRNA cleavage factor complex. Interacts directly with PCF11.

Its subcellular location is the nucleus. Functionally, required for endonucleolytic cleavage during polyadenylation-dependent pre-mRNA 3'-end formation. This is mRNA cleavage and polyadenylation factor CLP1 from Phaeosphaeria nodorum (strain SN15 / ATCC MYA-4574 / FGSC 10173) (Glume blotch fungus).